The primary structure comprises 250 residues: tRNA (guanine-N(7)-)-methyltransferase (250 aa).

Positions 1-10 (MTPDDPRDAS) are enriched in basic and acidic residues. Positions 1-30 (MTPDDPRDASDASLADATADSASRGHGSFF) are disordered. Residues 11–24 (DASLADATADSASR) show a composition bias toward low complexity. Residues Glu-79, Glu-104, Asp-131, and Asp-153 each contribute to the S-adenosyl-L-methionine site. Asp-153 is an active-site residue. Lys-157 and Asp-189 together coordinate substrate.

This sequence belongs to the class I-like SAM-binding methyltransferase superfamily. TrmB family.

The enzyme catalyses guanosine(46) in tRNA + S-adenosyl-L-methionine = N(7)-methylguanosine(46) in tRNA + S-adenosyl-L-homocysteine. It participates in tRNA modification; N(7)-methylguanine-tRNA biosynthesis. Its function is as follows. Catalyzes the formation of N(7)-methylguanine at position 46 (m7G46) in tRNA. In Rhodopseudomonas palustris (strain BisA53), this protein is tRNA (guanine-N(7)-)-methyltransferase.